Here is a 445-residue protein sequence, read N- to C-terminus: Phosphoglucosamine mutase (445 aa).

The active-site Phosphoserine intermediate is the S99. The Mg(2+) site is built by S99, D242, D244, and D246. S99 is subject to Phosphoserine.

Belongs to the phosphohexose mutase family. It depends on Mg(2+) as a cofactor. In terms of processing, activated by phosphorylation.

It catalyses the reaction alpha-D-glucosamine 1-phosphate = D-glucosamine 6-phosphate. In terms of biological role, catalyzes the conversion of glucosamine-6-phosphate to glucosamine-1-phosphate. The sequence is that of Phosphoglucosamine mutase from Campylobacter lari (strain RM2100 / D67 / ATCC BAA-1060).